Consider the following 687-residue polypeptide: MTLKPSKRRKGRSRHSRKKQITSAILTEEGIMIKAKPSSPYTYANRMADKRSRSSIDNISRTSFQSNISRTSFQSNSDNNSIFETASLISCVTCLSDTDTIDRSETSTTDTSKDDLSANPKLHYPSVNGQLPANTVIPYGRILDARYIEKEPLHYYDANSSPSSPLSSSMSNISEKCDLDELESSQKKERKGNSLSRGSNSSSSLLTSRSPFTKLVEVIFARPRRHDVVPKRVSLYIDYKPHSSSHLKEEDDLVEEILKRSYKNTRRNKSIFVIINPFGGKGKAKKLFMTKAKPLLLASRCSIEVVYTKYPGHAIEIAREMDIDKYDTIACASGDGIPHEVINGLYQRPDHVKAFNNIAITEIPCGSGNAMSVSCHWTNNPSYSTLCLIKSIETRIDLMCCSQPSYAREHPKLSFLSQTYGLIAETDINTEFIRWMGPARFELGVAFNIIQKKKYPCEIYVKYAAKSKNELKNHYLEHKNKGSLEFQHITMNKDNEDCDNYNYENEYETENEDEDEDADADDEDSHLISRDLADSSADQIKEEDFKIKYPLDEGIPSDWERLDPNISNNLGIFYTGKMPYVAADTKFFPAALPSDGTMDMVITDARTSLTRMAPILLGLDKGSHVLQPEVLHSKILAYKIIPKLGNGLFSVDGEKFPLEPLQVEIMPRLCKTLLRNGRYVDTDFDSM.

A disordered region spans residues 1-20; that stretch reads MTLKPSKRRKGRSRHSRKKQ. Residues cysteine 91 and cysteine 94 are each lipidated (S-palmitoyl cysteine; by AKR1). Residues 101–116 show a composition bias toward basic and acidic residues; sequence IDRSETSTTDTSKDDL. Disordered regions lie at residues 101-130 and 180-207; these read IDRS…VNGQ and DELE…SLLT. A compositionally biased stretch (low complexity) spans 193–207; that stretch reads NSLSRGSNSSSSLLT. In terms of domain architecture, DAGKc spans 266–405; the sequence is RRNKSIFVII…IDLMCCSQPS (140 aa). ATP is bound by residues 276 to 278 and threonine 308; that span reads NPF. 333–336 provides a ligand contact to substrate; sequence SGDG. Aspartate 335 (proton donor/acceptor) is an active-site residue. ATP contacts are provided by residues glutamate 340, 366–368, arginine 434, and arginine 440; that span reads GSG. The segment covering 506-524 has biased composition (acidic residues); that stretch reads EYETENEDEDEDADADDED. The disordered stretch occupies residues 506–525; the sequence is EYETENEDEDEDADADDEDS. ATP is bound at residue 652 to 654; the sequence is DGE.

Its subcellular location is the golgi apparatus membrane. It catalyses the reaction (4R)-hydroxysphinganine + ATP = (4R)-hydroxysphinganine 1-phosphate + ADP + H(+). It carries out the reaction a sphingoid base + ATP = a sphingoid 1-phosphate + ADP + H(+). The enzyme catalyses sphinganine + ATP = sphinganine 1-phosphate + ADP + H(+). Functionally, catalyzes the phosphorylation of the sphingoid long chain bases dihydrosphingosine (DHS or sphinganine) and phytosphingosine (PHS) to form dihydrosphingosine 1-phosphate (DHS-1P) and phytosphingosine 1-phosphate (PHS-1P) respectively. Redundant to LCB4, is only responsible for few percent of the total activity. Involved in the biosynthesis of sphingolipids and ceramides. Involved in heat-induced transient cell cycle arrest. Accumulation of phosphorylated sphingoid long chain bases (LCBPs) stimulates calcium influx and activates calcineurin signaling. Involved in heat-stress resistance. This is Sphingoid long chain base kinase 5 (LCB5) from Saccharomyces cerevisiae (strain ATCC 204508 / S288c) (Baker's yeast).